The sequence spans 1612 residues: DNA topoisomerase 2-beta (1612 aa).

An N-acetylalanine modification is found at A2. K3 is modified (N6-acetyllysine). Residues K21 and K22 each participate in a glycyl lysine isopeptide (Lys-Gly) (interchain with G-Cter in SUMO2) cross-link. ATP is bound by residues N100, N129, and 157–159 (SSN). Glycyl lysine isopeptide (Lys-Gly) (interchain with G-Cter in SUMO2) cross-links involve residues K165 and K166. 170–177 (GRNGYGAK) is an ATP binding site. Residues K216 and K287 each participate in a glycyl lysine isopeptide (Lys-Gly) (interchain with G-Cter in SUMO2) cross-link. Residues 351-353 (KKK) are interaction with DNA. Glycyl lysine isopeptide (Lys-Gly) (interchain with G-Cter in SUMO2) cross-links involve residues K355 and K361. 385–387 (QTK) provides a ligand contact to ATP. Residues K425, K427, and K434 each participate in a glycyl lysine isopeptide (Lys-Gly) (interchain with G-Cter in SUMO2) cross-link. In terms of domain architecture, Toprim spans 464 to 581 (CTLILTEGDS…SLLKHGFLEE (118 aa)). Positions 470, 550, and 552 each coordinate Mg(2+). Glycyl lysine isopeptide (Lys-Gly) (interchain with G-Cter in SUMO2) cross-links involve residues K588, K593, K623, K631, K634, K664, and K700. The Topo IIA-type catalytic domain occupies 724-1177 (IPSLVDGFKP…SPSDLWKEDL (454 aa)). Residue Y814 is the O-(5'-phospho-DNA)-tyrosine intermediate of the active site. The tract at residues 999 to 1008 (KLQTTLTCNS) is interaction with DNA. Residue K1080 forms a Glycyl lysine isopeptide (Lys-Gly) (interchain with G-Cter in SUMO2) linkage. A disordered region spans residues 1098–1128 (AWKEAQEKAAEEEDTQNQHDDSSSDSGTPSG). Glycyl lysine isopeptide (Lys-Gly) (interchain with G-Cter in SUMO2) cross-links involve residues K1202, K1205, K1214, and K1215. S1224 carries the post-translational modification Phosphoserine. Residues K1238, K1250, and K1259 each participate in a glycyl lysine isopeptide (Lys-Gly) (interchain with G-Cter in SUMO2) cross-link. Positions 1245-1586 (LLKKKKGDPD…FTSEPPALPR (342 aa)) are disordered. T1280 is modified (phosphothreonine). Residues K1311 and K1315 each participate in a glycyl lysine isopeptide (Lys-Gly) (interchain with G-Cter in SUMO2) cross-link. 2 stretches are compositionally biased toward basic and acidic residues: residues 1322–1332 (PWSDDESKSES) and 1346–1358 (SLLR…RPKY). S1324, S1328, S1330, S1332, and S1346 each carry phosphoserine. Y1358 carries the post-translational modification Phosphotyrosine. A compositionally biased stretch (acidic residues) spans 1362 to 1379 (FSEEEEEDADDDDDNNDL). S1363 is subject to Phosphoserine. A Glycyl lysine isopeptide (Lys-Gly) (interchain with G-Cter in SUMO2) cross-link involves residue K1385. S1387 carries the post-translational modification Phosphoserine. T1390 is subject to Phosphothreonine. S1400 is subject to Phosphoserine. Y1408 bears the Phosphotyrosine mark. S1411 is subject to Phosphoserine. Residues 1417-1429 (ATPEKSSHDKKSQ) show a composition bias toward basic and acidic residues. K1427 is covalently cross-linked (Glycyl lysine isopeptide (Lys-Gly) (interchain with G-Cter in SUMO2)). A phosphoserine mark is found at S1428, S1439, and S1441. A Glycyl lysine isopeptide (Lys-Gly) (interchain with G-Cter in SUMO2) cross-link involves residue K1443. Over residues 1443-1453 (KSEDDSAKFDS) the composition is skewed to basic and acidic residues. Residues S1448, S1453, and S1460 each carry the phosphoserine modification. Residue K1477 forms a Glycyl lysine isopeptide (Lys-Gly) (interchain with G-Cter in SUMO2) linkage. The interval 1493 to 1499 (KAKRAPK) is interaction with PLSCR1. Residues S1509, S1511, and S1513 each carry the phosphoserine modification. Basic residues predominate over residues 1526–1536 (GKGRGAKKRKA). 2 positions are modified to phosphoserine: S1537 and S1539. Residues 1550-1561 (KPSKTASKKPKK) show a composition bias toward basic residues. At T1562 the chain carries Phosphothreonine. Phosphoserine occurs at positions 1563 and 1568. Position 1596 is a phosphotyrosine (Y1596). Residue S1600 is modified to Phosphoserine.

The protein belongs to the type II topoisomerase family. As to quaternary structure, homodimer. Interacts with PLSCR1 and KIAA1210. It depends on Mg(2+) as a cofactor. Mn(2+) serves as cofactor. The cofactor is Ca(2+).

The protein resides in the nucleus. It is found in the nucleolus. The protein localises to the nucleoplasm. The catalysed reaction is ATP-dependent breakage, passage and rejoining of double-stranded DNA.. In terms of biological role, key decatenating enzyme that alters DNA topology by binding to two double-stranded DNA molecules, generating a double-stranded break in one of the strands, passing the intact strand through the broken strand, and religating the broken strand. The chain is DNA topoisomerase 2-beta (TOP2B) from Cricetulus longicaudatus (Long-tailed dwarf hamster).